The primary structure comprises 438 residues: Histidinol dehydrogenase (438 aa).

Residues tyrosine 137, glutamine 198, and asparagine 221 each coordinate NAD(+). Substrate contacts are provided by serine 244, glutamine 266, and histidine 269. The Zn(2+) site is built by glutamine 266 and histidine 269. Catalysis depends on proton acceptor residues glutamate 334 and histidine 335. 4 residues coordinate substrate: histidine 335, aspartate 368, glutamate 422, and histidine 427. Aspartate 368 contacts Zn(2+). Histidine 427 provides a ligand contact to Zn(2+).

It belongs to the histidinol dehydrogenase family. Zn(2+) serves as cofactor.

It carries out the reaction L-histidinol + 2 NAD(+) + H2O = L-histidine + 2 NADH + 3 H(+). The protein operates within amino-acid biosynthesis; L-histidine biosynthesis; L-histidine from 5-phospho-alpha-D-ribose 1-diphosphate: step 9/9. Its function is as follows. Catalyzes the sequential NAD-dependent oxidations of L-histidinol to L-histidinaldehyde and then to L-histidine. The sequence is that of Histidinol dehydrogenase from Aromatoleum aromaticum (strain DSM 19018 / LMG 30748 / EbN1) (Azoarcus sp. (strain EbN1)).